A 459-amino-acid polypeptide reads, in one-letter code: Putrescine aminotransferase (459 aa).

Residues 150–151 (GT) and Q274 each bind pyridoxal 5'-phosphate. An N6-(pyridoxal phosphate)lysine modification is found at K300. Position 332 (T332) interacts with pyridoxal 5'-phosphate.

This sequence belongs to the class-III pyridoxal-phosphate-dependent aminotransferase family. Putrescine aminotransferase subfamily. Pyridoxal 5'-phosphate serves as cofactor.

It carries out the reaction an alkane-alpha,omega-diamine + 2-oxoglutarate = an omega-aminoaldehyde + L-glutamate. It catalyses the reaction putrescine + 2-oxoglutarate = 1-pyrroline + L-glutamate + H2O. The catalysed reaction is cadaverine + 2-oxoglutarate = 5-aminopentanal + L-glutamate. Its pathway is amine and polyamine degradation; putrescine degradation; 4-aminobutanal from putrescine (transaminase route): step 1/1. Catalyzes the aminotransferase reaction from putrescine to 2-oxoglutarate, leading to glutamate and 4-aminobutanal, which spontaneously cyclizes to form 1-pyrroline. This is the first step in one of two pathways for putrescine degradation, where putrescine is converted into 4-aminobutanoate (gamma-aminobutyrate or GABA) via 4-aminobutanal. Also functions as a cadaverine transaminase in a a L-lysine degradation pathway to succinate that proceeds via cadaverine, glutarate and L-2-hydroxyglutarate. The polypeptide is Putrescine aminotransferase (Escherichia coli O6:H1 (strain CFT073 / ATCC 700928 / UPEC)).